We begin with the raw amino-acid sequence, 754 residues long: MKNSIISYPRIGANRELKFAIEKYFKAQSSKEELLETAKNLRARHWKDIQNAGIDFIPSNDFSLYDNVLDTAVLFNIVHTKYKNLNLDALDEYFAQSRGYQGENGDVTALAMKKWFNTNYHYLVPECDDASIIALTGDKIFKEYLEAKELGIESKPVLIGIFTLFKLIAFKDKKTQKLAKEKLLNAYIELFDKLNELKVTWLELDEPYLVYDLSKEDIALFEEFYQELLNHKKDLKILLQSYFGDLRDIYPKLLESKFDALGLDFIEGKQSLALVQQYGFAKDKILFAGLINGKNIYANDYAKSLKLIKELQKYTQNIILNTSCSLLHVPYSTEFESKLDPSYLKLFAFAKEKLQELKDLKEILNSSEENPLFKANQELFKNIPERLDEKVKARLKALKKEDFTRTPSFKERALIQKEFLKLPLLPTTTIGSFPQSADVRSNRLAFKQKKISAQNYTEFNQQKIKECIQIQEEIGLDVLVHGEFERNDMVEYFGENLKGFLFTQNGWVQSYGTRCVKPPIIWGDVSRTKPITLACSKFAQSLSQKIVKGMLTGPVTILNWSFPREDISLKESTEQIALAIRDEVLDLENAGIKIIQIDEAALREKLPLRKSDWHSEYLDWAIPAFNLVHSGVKAKTQIHTHMCYSEFSDILKEIDAMDADVISFEASRSNLSLLDTLKAVHFKTEVGPGVYDIHSPRVPSVEELSLTIEKILNKLPKEQIWINPDCGLKTRAYEEVIASLKNLVTATQKIRKQL.

Residues 15–18 and Lys-114 contribute to the 5-methyltetrahydropteroyltri-L-glutamate site; that span reads RELK. Residues 430–432 and Glu-483 contribute to the L-homocysteine site; that span reads IGS. L-methionine-binding positions include 430-432 and Glu-483; that span reads IGS. Residues 514–515 and Trp-560 each bind 5-methyltetrahydropteroyltri-L-glutamate; that span reads RC. Residue Asp-598 participates in L-homocysteine binding. Asp-598 is an L-methionine binding site. Position 604 (Glu-604) interacts with 5-methyltetrahydropteroyltri-L-glutamate. Zn(2+) contacts are provided by His-641, Cys-643, and Glu-665. The active-site Proton donor is the His-694. Residue Cys-726 participates in Zn(2+) binding.

It belongs to the vitamin-B12 independent methionine synthase family. Zn(2+) serves as cofactor.

The catalysed reaction is 5-methyltetrahydropteroyltri-L-glutamate + L-homocysteine = tetrahydropteroyltri-L-glutamate + L-methionine. Its pathway is amino-acid biosynthesis; L-methionine biosynthesis via de novo pathway; L-methionine from L-homocysteine (MetE route): step 1/1. In terms of biological role, catalyzes the transfer of a methyl group from 5-methyltetrahydrofolate to homocysteine resulting in methionine formation. The chain is 5-methyltetrahydropteroyltriglutamate--homocysteine methyltransferase from Campylobacter jejuni subsp. doylei (strain ATCC BAA-1458 / RM4099 / 269.97).